The chain runs to 128 residues: KHDC1-like protein (128 aa).

The protein belongs to the KHDC1 family.

This chain is KHDC1-like protein (KHDC1L), found in Homo sapiens (Human).